Consider the following 150-residue polypeptide: Large ribosomal subunit protein bL9 (150 aa).

It belongs to the bacterial ribosomal protein bL9 family.

In terms of biological role, binds to the 23S rRNA. The protein is Large ribosomal subunit protein bL9 of Delftia acidovorans (strain DSM 14801 / SPH-1).